An 87-amino-acid polypeptide reads, in one-letter code: Large ribosomal subunit protein bL31B (87 aa).

This sequence belongs to the bacterial ribosomal protein bL31 family. Type B subfamily. Part of the 50S ribosomal subunit.

The protein is Large ribosomal subunit protein bL31B of Corynebacterium kroppenstedtii (strain DSM 44385 / JCM 11950 / CIP 105744 / CCUG 35717).